The following is a 431-amino-acid chain: Glucose-1-phosphate adenylyltransferase (431 aa).

Lysine 39 contacts beta-D-fructose 1,6-bisphosphate. AMP-binding residues include arginine 40, histidine 46, and arginine 52. An alpha-D-glucose 1-phosphate-binding site is contributed by tyrosine 114. Arginine 130 lines the AMP pocket. Alpha-D-glucose 1-phosphate is bound by residues glycine 179, glutamate 194–lysine 195, and serine 212. Residues glutamate 370 and arginine 386 each coordinate AMP. Beta-D-fructose 1,6-bisphosphate is bound by residues arginine 419–arginine 423 and glutamine 429–arginine 431.

This sequence belongs to the bacterial/plant glucose-1-phosphate adenylyltransferase family. As to quaternary structure, homotetramer.

It catalyses the reaction alpha-D-glucose 1-phosphate + ATP + H(+) = ADP-alpha-D-glucose + diphosphate. Its pathway is glycan biosynthesis; glycogen biosynthesis. With respect to regulation, allosterically activated by fructose-1,6-bisphosphate (F16BP) and inhibited by AMP. Involved in the biosynthesis of ADP-glucose, a building block required for the elongation reactions to produce glycogen. Catalyzes the reaction between ATP and alpha-D-glucose 1-phosphate (G1P) to produce pyrophosphate and ADP-Glc. The chain is Glucose-1-phosphate adenylyltransferase from Salmonella paratyphi A (strain ATCC 9150 / SARB42).